Consider the following 194-residue polypeptide: Molybdenum cofactor guanylyltransferase (194 aa).

GTP is bound by residues 12-14 (LAG), lysine 25, asparagine 53, aspartate 70, and aspartate 100. Residue aspartate 100 participates in Mg(2+) binding.

The protein belongs to the MobA family. Monomer. Mg(2+) serves as cofactor.

It localises to the cytoplasm. The enzyme catalyses Mo-molybdopterin + GTP + H(+) = Mo-molybdopterin guanine dinucleotide + diphosphate. In terms of biological role, transfers a GMP moiety from GTP to Mo-molybdopterin (Mo-MPT) cofactor (Moco or molybdenum cofactor) to form Mo-molybdopterin guanine dinucleotide (Mo-MGD) cofactor. The chain is Molybdenum cofactor guanylyltransferase from Vibrio atlanticus (strain LGP32) (Vibrio splendidus (strain Mel32)).